Reading from the N-terminus, the 398-residue chain is Chalcone synthase (398 aa).

The active site involves C167.

It belongs to the thiolase-like superfamily. Chalcone/stilbene synthases family.

It catalyses the reaction (E)-4-coumaroyl-CoA + 3 malonyl-CoA + 3 H(+) = 2',4,4',6'-tetrahydroxychalcone + 3 CO2 + 4 CoA. The protein operates within secondary metabolite biosynthesis; flavonoid biosynthesis. In terms of biological role, the primary product of this enzyme is 4,2',4',6'-tetrahydroxychalcone (also termed naringenin-chalcone or chalcone) which can under specific conditions spontaneously isomerize into naringenin. In Callistephus chinensis (China aster), this protein is Chalcone synthase (CHS).